The sequence spans 68 residues: Large ribosomal subunit protein bL35 (68 aa).

Positions 29 to 68 (GGVSHYNTKKSSKRKRQGRKPQYVPKNLEHKVKALLPNDV) are disordered. Basic residues predominate over residues 35–47 (NTKKSSKRKRQGR).

This sequence belongs to the bacterial ribosomal protein bL35 family.

The chain is Large ribosomal subunit protein bL35 from Sulfurihydrogenibium sp. (strain YO3AOP1).